The following is a 190-amino-acid chain: Peptidyl-tRNA hydrolase (190 aa).

Position 14 (Phe-14) interacts with tRNA. His-19 acts as the Proton acceptor in catalysis. Met-64, Asn-66, and Asn-112 together coordinate tRNA.

This sequence belongs to the PTH family. Monomer.

It localises to the cytoplasm. It catalyses the reaction an N-acyl-L-alpha-aminoacyl-tRNA + H2O = an N-acyl-L-amino acid + a tRNA + H(+). Functionally, hydrolyzes ribosome-free peptidyl-tRNAs (with 1 or more amino acids incorporated), which drop off the ribosome during protein synthesis, or as a result of ribosome stalling. In terms of biological role, catalyzes the release of premature peptidyl moieties from peptidyl-tRNA molecules trapped in stalled 50S ribosomal subunits, and thus maintains levels of free tRNAs and 50S ribosomes. In Staphylococcus saprophyticus subsp. saprophyticus (strain ATCC 15305 / DSM 20229 / NCIMB 8711 / NCTC 7292 / S-41), this protein is Peptidyl-tRNA hydrolase.